Reading from the N-terminus, the 502-residue chain is Thermosome subunit beta (502 aa).

This sequence belongs to the TCP-1 chaperonin family. As to quaternary structure, forms a Heterooligomeric complex of two stacked eight-membered rings.

Its function is as follows. Molecular chaperone; binds unfolded polypeptides in vitro, and has a weak ATPase activity. The sequence is that of Thermosome subunit beta (thsB) from Desulfurococcus mucosus (Desulfurococcus mobilis).